We begin with the raw amino-acid sequence, 117 residues long: MDKKVARIRRATRARHLMREQGATRLVVHRTPRHIYAQVIAPNGSEVLAAASTVEKVIKEQVKYTGNKDAAAVVGKLVAERALAKGIQAVAFDRSGFKYHGRVQVLADAAREAGLQF.

This sequence belongs to the universal ribosomal protein uL18 family. As to quaternary structure, part of the 50S ribosomal subunit; part of the 5S rRNA/L5/L18/L25 subcomplex. Contacts the 5S and 23S rRNAs.

In terms of biological role, this is one of the proteins that bind and probably mediate the attachment of the 5S RNA into the large ribosomal subunit, where it forms part of the central protuberance. This is Large ribosomal subunit protein uL18 from Actinobacillus pleuropneumoniae serotype 5b (strain L20).